Here is a 243-residue protein sequence, read N- to C-terminus: Exosome complex component Rrp41 (243 aa).

It belongs to the RNase PH family. Rrp41 subfamily. As to quaternary structure, component of the archaeal exosome complex. Forms a hexameric ring-like arrangement composed of 3 Rrp41-Rrp42 heterodimers. The hexameric ring associates with a trimer of Rrp4 and/or Csl4 subunits.

It is found in the cytoplasm. In terms of biological role, catalytic component of the exosome, which is a complex involved in RNA degradation. Has 3'-&gt;5' exoribonuclease activity. Can also synthesize heteromeric RNA-tails. In Sulfolobus acidocaldarius (strain ATCC 33909 / DSM 639 / JCM 8929 / NBRC 15157 / NCIMB 11770), this protein is Exosome complex component Rrp41.